We begin with the raw amino-acid sequence, 486 residues long: NADH-quinone oxidoreductase subunit N 1 (486 aa).

The next 14 membrane-spanning stretches (helical) occupy residues 15–35 (FLPE…DPVI), 46–66 (ISLI…GIAG), 72–92 (MLMV…VGIL), 111–128 (YHAL…MAAS), 131–151 (LIMV…LAGY), 166–186 (FLLG…IYGL), 208–228 (FVGI…SAAP), 241–261 (PTPV…AIFL), 276–296 (QPLV…AAIL), 303–323 (MLAY…TAHS), 331–351 (MFYL…VSVL), 375–395 (AAMF…GGFF), 410–432 (IWLT…RILV), and 455–475 (FALI…GWVL).

It belongs to the complex I subunit 2 family. As to quaternary structure, NDH-1 is composed of 14 different subunits. Subunits NuoA, H, J, K, L, M, N constitute the membrane sector of the complex.

The protein resides in the cell inner membrane. It catalyses the reaction a quinone + NADH + 5 H(+)(in) = a quinol + NAD(+) + 4 H(+)(out). Functionally, NDH-1 shuttles electrons from NADH, via FMN and iron-sulfur (Fe-S) centers, to quinones in the respiratory chain. The immediate electron acceptor for the enzyme in this species is believed to be ubiquinone. Couples the redox reaction to proton translocation (for every two electrons transferred, four hydrogen ions are translocated across the cytoplasmic membrane), and thus conserves the redox energy in a proton gradient. The polypeptide is NADH-quinone oxidoreductase subunit N 1 (Solibacter usitatus (strain Ellin6076)).